The chain runs to 78 residues: uncharacterized protein (78 aa).

The segment covering 56 to 66 (ERANAGKRVSE) has biased composition (basic and acidic residues). The segment at 56 to 78 (ERANAGKRVSEEEQINGKRKRKD) is disordered.

This is an uncharacterized protein from Saccharomyces cerevisiae (strain ATCC 204508 / S288c) (Baker's yeast).